A 316-amino-acid chain; its full sequence is Ribosomal RNA small subunit methyltransferase H (316 aa).

S-adenosyl-L-methionine is bound by residues 35-37, aspartate 55, phenylalanine 84, aspartate 105, and glutamine 112; that span reads AGH.

This sequence belongs to the methyltransferase superfamily. RsmH family.

It localises to the cytoplasm. The catalysed reaction is cytidine(1402) in 16S rRNA + S-adenosyl-L-methionine = N(4)-methylcytidine(1402) in 16S rRNA + S-adenosyl-L-homocysteine + H(+). In terms of biological role, specifically methylates the N4 position of cytidine in position 1402 (C1402) of 16S rRNA. The polypeptide is Ribosomal RNA small subunit methyltransferase H (Streptococcus pneumoniae (strain P1031)).